The chain runs to 95 residues: uncharacterized protein (95 aa).

This is an uncharacterized protein from Dictyostelium discoideum (Social amoeba).